Reading from the N-terminus, the 688-residue chain is PTS system glucoside-specific EIICBA component (688 aa).

A PTS EIIC type-1 domain is found at 3–427; the sequence is KKLFGQLQRI…FKLKTPGRED (425 aa). 10 consecutive transmembrane segments (helical) span residues 12–32, 81–101, 137–157, 182–202, 223–243, 284–304, 315–335, 340–360, 364–384, and 395–415; these read IGKA…LLAF, LGLA…YLIM, LVLG…MGAL, FVPI…SFAW, LTTF…LHHI, AFTT…AFAI, VVGG…ITEP, FLFV…TSFL, LLGV…ILYG, and LVIP…DFAI. A PTS EIIB type-1 domain is found at 438-519; it reads AKLPFDVLDA…AKIMSGEITK (82 aa). The active-site Phosphocysteine intermediate; for EIIB activity is Cys460. The 105-residue stretch at 560–664 folds into the PTS EIIA type-1 domain; that stretch reads DQVFAGKMMG…SIVTPMIITN (105 aa). The active-site Tele-phosphohistidine intermediate; for EIIA activity is the His612.

The protein resides in the cell membrane. The phosphoenolpyruvate-dependent sugar phosphotransferase system (sugar PTS), a major carbohydrate active -transport system, catalyzes the phosphorylation of incoming sugar substrates concomitantly with their translocation across the cell membrane. This system is involved in alpha- and beta-glucoside transport. This is PTS system glucoside-specific EIICBA component (glcB) from Staphylococcus aureus (strain bovine RF122 / ET3-1).